The following is a 102-amino-acid chain: Large ribosomal subunit protein bL21 (102 aa).

This sequence belongs to the bacterial ribosomal protein bL21 family. In terms of assembly, part of the 50S ribosomal subunit. Contacts protein L20.

Functionally, this protein binds to 23S rRNA in the presence of protein L20. The sequence is that of Large ribosomal subunit protein bL21 from Leptospira biflexa serovar Patoc (strain Patoc 1 / Ames).